The chain runs to 72 residues: MGISKKTVVQSFALIIIISIVMSTTEANSIGAPAMREDLPKGCAPGSSAGCKMQPANPYKPGCEASQRCRGG.

Residues Met1–Ala27 form the signal peptide. 2 cysteine pairs are disulfide-bonded: Cys43-Cys51 and Cys63-Cys69.

The protein belongs to the plant rapid alkalinization factor (RALF) family.

Its subcellular location is the secreted. In terms of biological role, cell signaling peptide that may regulate plant stress, growth, and development. Mediates a rapid alkalinization of extracellular space by mediating a transient increase in the cytoplasmic Ca(2+) concentration leading to a calcium-dependent signaling events through a cell surface receptor and a concomitant activation of some intracellular mitogen-activated protein kinases. This Arabidopsis thaliana (Mouse-ear cress) protein is Protein RALF-like 36.